A 591-amino-acid chain; its full sequence is Probable metalloprotease ARX1 (591 aa).

This sequence belongs to the peptidase M24 family. Component of the nucleoplasmic and cytoplasmic pre-60S ribosomal particles.

It is found in the cytoplasm. The protein resides in the nucleus. In terms of biological role, probable metalloprotease involved in proper assembly of pre-ribosomal particles during the biogenesis of the 60S ribosomal subunit. Accompanies the pre-60S particles to the cytoplasm. The polypeptide is Probable metalloprotease ARX1 (ARX1) (Eremothecium gossypii (strain ATCC 10895 / CBS 109.51 / FGSC 9923 / NRRL Y-1056) (Yeast)).